A 61-amino-acid polypeptide reads, in one-letter code: Large ribosomal subunit protein uL30 (61 aa).

It belongs to the universal ribosomal protein uL30 family. As to quaternary structure, part of the 50S ribosomal subunit.

The polypeptide is Large ribosomal subunit protein uL30 (Corynebacterium jeikeium (strain K411)).